A 284-amino-acid chain; its full sequence is Nucleotide-binding protein Shal_3708 (284 aa).

Position 8–15 (8–15 (GRSGSGKS)) interacts with ATP. 56 to 59 (DIRN) contacts GTP.

This sequence belongs to the RapZ-like family.

Displays ATPase and GTPase activities. In Shewanella halifaxensis (strain HAW-EB4), this protein is Nucleotide-binding protein Shal_3708.